The primary structure comprises 951 residues: 2-oxoglutarate dehydrogenase E1 component (951 aa).

The interval 906–925 is disordered; the sequence is RRRRSSPAEGNPTAHKQEQA.

This sequence belongs to the alpha-ketoglutarate dehydrogenase family. In terms of assembly, homodimer. Part of the 2-oxoglutarate dehydrogenase (OGDH) complex composed of E1 (2-oxoglutarate dehydrogenase), E2 (dihydrolipoamide succinyltransferase) and E3 (dihydrolipoamide dehydrogenase); the complex contains multiple copies of the three enzymatic components (E1, E2 and E3). Thiamine diphosphate serves as cofactor.

The catalysed reaction is N(6)-[(R)-lipoyl]-L-lysyl-[protein] + 2-oxoglutarate + H(+) = N(6)-[(R)-S(8)-succinyldihydrolipoyl]-L-lysyl-[protein] + CO2. E1 component of the 2-oxoglutarate dehydrogenase (OGDH) complex which catalyzes the decarboxylation of 2-oxoglutarate, the first step in the conversion of 2-oxoglutarate to succinyl-CoA and CO(2). The polypeptide is 2-oxoglutarate dehydrogenase E1 component (Exiguobacterium sp. (strain ATCC BAA-1283 / AT1b)).